We begin with the raw amino-acid sequence, 344 residues long: Fructose-1,6-bisphosphatase class 1 (344 aa).

Mg(2+)-binding residues include Glu92, Asp115, Leu117, and Asp118. Residues 118–121 (DGSS), Asn211, Tyr244, and Lys274 each bind substrate. Residue Glu280 coordinates Mg(2+).

It belongs to the FBPase class 1 family. Homotetramer. Mg(2+) serves as cofactor.

The protein localises to the cytoplasm. It catalyses the reaction beta-D-fructose 1,6-bisphosphate + H2O = beta-D-fructose 6-phosphate + phosphate. Its pathway is carbohydrate biosynthesis; gluconeogenesis. In Aeromonas salmonicida (strain A449), this protein is Fructose-1,6-bisphosphatase class 1.